The sequence spans 493 residues: Desmethylyatein synthase (493 aa).

A helical membrane pass occupies residues 1–21 (METFQCLTLFLLFISTVFILK). Cys434 provides a ligand contact to heme.

It belongs to the cytochrome P450 family. Heme is required as a cofactor.

Its subcellular location is the membrane. The enzyme catalyses (-)-bursehernin + reduced [NADPH--hemoprotein reductase] + O2 = (-)-5'-demethylyatein + oxidized [NADPH--hemoprotein reductase] + H2O + H(+). Its pathway is aromatic compound metabolism; phenylpropanoid biosynthesis. Its function is as follows. Cytochrome P450 involved in the biosynthesis of etoposide, a chemotherapeutic compound of the topoisomerase inhibitor family. Catalyzes the conversion of bursehernin to demethylyatein. The protein is Desmethylyatein synthase of Sinopodophyllum hexandrum (Himalayan may apple).